The sequence spans 66 residues: DNA-directed RNA polymerase subunit Rpo10 (66 aa).

Cysteine 7, cysteine 10, cysteine 47, and cysteine 48 together coordinate Zn(2+).

It belongs to the archaeal Rpo10/eukaryotic RPB10 RNA polymerase subunit family. Part of the RNA polymerase complex. The cofactor is Zn(2+).

It localises to the cytoplasm. The enzyme catalyses RNA(n) + a ribonucleoside 5'-triphosphate = RNA(n+1) + diphosphate. Its function is as follows. DNA-dependent RNA polymerase (RNAP) catalyzes the transcription of DNA into RNA using the four ribonucleoside triphosphates as substrates. The protein is DNA-directed RNA polymerase subunit Rpo10 of Haloarcula marismortui (strain ATCC 43049 / DSM 3752 / JCM 8966 / VKM B-1809) (Halobacterium marismortui).